A 64-amino-acid polypeptide reads, in one-letter code: Small ribosomal subunit protein bS21 (64 aa).

Belongs to the bacterial ribosomal protein bS21 family.

In Amoebophilus asiaticus (strain 5a2), this protein is Small ribosomal subunit protein bS21.